Reading from the N-terminus, the 281-residue chain is HTH-type transcriptional activator RamA (281 aa).

The HTH luxR-type domain occupies 213–278; sequence RIKQTTKLSA…EAVNAARRIG (66 aa).

Its function is as follows. RamA is a master regulator of acetate metabolism. It positively controls the expression of acnA, aceA, aceB, ack, pta and ramB genes in the presence of acetate. RamA is also a positive regulator of rpf2 gene expression during growth on glucose as the sole carbon source. This Corynebacterium glutamicum (strain ATCC 13032 / DSM 20300 / JCM 1318 / BCRC 11384 / CCUG 27702 / LMG 3730 / NBRC 12168 / NCIMB 10025 / NRRL B-2784 / 534) protein is HTH-type transcriptional activator RamA.